The sequence spans 147 residues: Large ribosomal subunit protein bL9 (147 aa).

It belongs to the bacterial ribosomal protein bL9 family.

In terms of biological role, binds to the 23S rRNA. This chain is Large ribosomal subunit protein bL9, found in Phocaeicola vulgatus (strain ATCC 8482 / DSM 1447 / JCM 5826 / CCUG 4940 / NBRC 14291 / NCTC 11154) (Bacteroides vulgatus).